Here is a 2475-residue protein sequence, read N- to C-terminus: MGSLGDLPLNRISVLFGSKYSEIDRSALHIRRYLSTHRAATWLEDAVEDLPSVWQDVTKVWPAGEGIHGEAGLQQLSAFLRGEELPLNMEDPMNYLLMPITVLRHLVDFHEFKEAGSDCDIKSMQGFCAGYLAAVAGCWEKDQSEFSKVVATMVRTAIFIGAAVDLDELATQRATSIAVRWKTAEAYKPFAATLGRYPGAYIACITDESSVTVTVWEDQAAALVQELEGNGLLVKDTRLRGRFHHADHLSAAQDILKLCQQDTRFQLPNTCPARELPRSNADGDLPTLKSVLSVVIQSILISQADWNLTVSNTLNSLDSSDAKCILSIGAGQFLPRQARSQILNAIDSSRGDNLVNGDHDNIAITNGTSFAASSVNGTAPVPTSIPIAVTGLACRYPQADCVEELWKILEQGLCTVSRMPESRLKPDRLQRKPDGPFWGNFISRPDAFDHRFFKISAREAESMDPQQRLLLQVAYEAMESAGYCGLRATNLPEDVGCYVGVGTEDYSENVGSRNATAFSATGTLQAFNSGRVSHHFGWTGPSVTVDTACSSAAVAIHLACQALQTSDCSVAVAGGVNVMTDPRWSQNLAAASFLSPTGASKAFDTNANGYCRGEGAGLVVLRPLEAALRDGDPIHAVITGTSVNQGANCSPITVPDSNSQRSLYMKALSLSGLKPEVVSYVEAHGTGTQVGDPIEFESIRKTFAVPSRTERLYVGSIKDNIGHTETSSGVAGLLKTILMLQKGKIPKQANFTQLNPKIIVNQEDQMSIPTSLIRWETQKRVAMVTNYGAAGSNAAIVLKEPIPTPTALCSDEKERLLSAVPFFVAAQTEESLREYCQALKARLLNGAHLESIAVQDLAFNLARKQNRSMEFSVSFTNSSSVTELRERLDDVISGRMNIVKKTHTSNPVVLCFGGQTGNKASISESLVASSALIRLHLDECESACKALGLPSLFPAIFDSSPNKDIVNLHCVLFSIQYATAKAWIDSGLEVDRMIGHSFGQLTAVCVAGGLSLIDTMRLISTRAHLIRSEWTSEIGVMLSLKGEKNAVRDLLDSVPDSADLACVNGADSFVAAGSEVAIHEIEKNAAERGIKSQRLDNTHAFHSRLVDPILPGLAKVASSLNYKPLRIPVEACSESKEDWMLPTWEKIVQHSRKPVYFHQAVHRTISRIQGPAIWLEAGTMSPIIGMVRRAVDTPSSARGHVFCPMDLSGPQAESNLAKVTSSLWSNGVPVQFWPFHGSQRGYQWINLPPYQFAKTSHWIEYDPTAFSYQMSKQEKPPIEDLKLVQLLKNEGKVSLFRINDNDPMFRMCTAGHAVVEQNLCPASLYFELVVRAAITTLPKGTDPTMYHLADLNISAPLVLDMPGSVLLELTQRDSTPGQWTFVLFTREDTLQSVTHATGTISLSPGADNTGISSRFSSLKRLLNPAHWDSIATSPSSSGLKRSTVYQAFRRAVTYAEYYRGVESVYALGHEATGRVHLPSSPTKNSPCDPILIDNFLQVAGIHVNCLSETHDDEVFVCSSVGDVIIGESFVKRDPSVAAPWVVYSNYEQESKKKALCDVFVVDEATGSLALCVLAATFTSVSIQSLRRTLTRLTNKGVSPVPVDIAVAAEVTPAVPAASSITATRASSNGDDLRTVQAMLSELLGIPTSEIPASASLADVGVDSLMNTEVLSEIKNRFQVVITKSELTAIEDVGALVQRIFPGRSTVHIENHDQPAVGITAINGGSKPSSGGPVPASKVGDDLSGFADKAGELFTASRKSNEHSEATKFLGFCDTVFPQQMELVTAYVVEAFKVLGVDLQSLKAGQPIPSVDILPQHGQVMNQLYAVLEYSGLVDRSGTSICRGHCEVNQDATAVLHQKILNDHPQHTSEHKLLHTTGPRLADCLTGAADPLSLLFQDAQARALMQDVYSNAPMFKSATMHLAQYLKNLLRQVNSPRPIKILEIGAGTGGTTDYLLKQLSSVAGLRFEYTFTDISPSLVTLARKRFKTFNFIHYQTLDIEKGPASEMLGQYDIIVSSNCIHATRSLSTSCSNIQKLLRPHGILCLIELTRNLFWFDLVFGLLEGWWLFNDGRSHALAHESFWDQTLRSSGFNWVDWTDNQSEESNILRLIVASPTRPALSLEATTESSAIHEETVVYGRKDGLDLLADIHYPQILDSEGKNRPVALLIHGGGHIMLSRKDVRPPQVKLLIDMGFLPVSIDYRLCPEVSLLEGPMADACEALAWAQNTLPQLNLQRPDIRPDGNNVVAVGWSSGGHLAMTLAWTAPARGLRAPEAVLSFYCATDYTDPFWTKPNFPYQGDVSIEDVPTQSPFLGINDRAITSYNPAPRKRALGGWMSPTDPRSRIALHMNWTGQTLTVLFNGHKYKSLVAIAGGDDNVILPKPTLSEIQKACPLSHVYAGQYKTPTFIIHGTLDDLIPVEQSQRTHDQMLANGVESELRVVADAPHLFDMSPNLKNNKDACRAVADGYEFLRSHVGL.

Residues 14-253 (VLFGSKYSEI…HHADHLSAAQ (240 aa)) form an N-terminal acylcarrier protein transacylase domain (SAT) region. Residues 384–800 (SIPIAVTGLA…GSNAAIVLKE (417 aa)) form the Ketosynthase family 3 (KS3) domain. Catalysis depends on for beta-ketoacyl synthase activity residues cysteine 549, histidine 684, and histidine 723. A malonyl-CoA:ACP transacylase (MAT) domain region spans residues 910-1212 (LCFGGQTGNK…CPMDLSGPQA (303 aa)). The For acyl/malonyl transferase activity role is filled by serine 997. Positions 1279–1407 (EDLKLVQLLK…GTISLSPGAD (129 aa)) are N-terminal hotdog fold. The region spanning 1279–1586 (EDLKLVQLLK…FTSVSIQSLR (308 aa)) is the PKS/mFAS DH domain. The product template (PT) domain stretch occupies residues 1282–1585 (KLVQLLKNEG…TFTSVSIQSL (304 aa)). Residue histidine 1312 is the Proton acceptor; for dehydratase activity of the active site. Positions 1435–1586 (SSSGLKRSTV…FTSVSIQSLR (152 aa)) are C-terminal hotdog fold. Aspartate 1493 serves as the catalytic Proton donor; for dehydratase activity. Positions 1626–1703 (SSNGDDLRTV…ALVQRIFPGR (78 aa)) constitute a Carrier domain. Serine 1663 carries the post-translational modification O-(pantetheine 4'-phosphoryl)serine. A methyltransferase (CMeT) domain region spans residues 1865–2098 (QHTSEHKLLH…GFNWVDWTDN (234 aa)). Positions 2127–2475 (SAIHEETVVY…YEFLRSHVGL (349 aa)) are thioesterase (TE) domain. Active-site for thioesterase activity residues include serine 2250, aspartate 2412, and histidine 2444.

The catalysed reaction is 3 malonyl-CoA + acetyl-CoA + 2 S-adenosyl-L-methionine = 3,5-dimethylorsellinate + 2 S-adenosyl-L-homocysteine + 3 CO2 + 4 CoA. Its pathway is secondary metabolite biosynthesis; terpenoid biosynthesis. Non-reducing polyketide synthase; part of the gene cluster A that mediates the biosynthesis of the fungal meroterpenoid acetoxydehydroaustin. The first step of the pathway is the synthesis of 3,5-dimethylorsellinic acid by the polyketide synthase ausA. 3,5-dimethylorsellinic acid is then prenylated by the polyprenyl transferase ausN. Further epoxidation by the FAD-dependent monooxygenase ausM and cyclization by the probable terpene cyclase ausL lead to the formation of protoaustinoid A. Protoaustinoid A is then oxidized to spiro-lactone preaustinoid A3 by the combined action of the FAD-binding monooxygenases ausB and ausC, and the dioxygenase ausE. Acid-catalyzed keto-rearrangement and ring contraction of the tetraketide portion of preaustinoid A3 by ausJ lead to the formation of preaustinoid A4. The aldo-keto reductase ausK, with the help of ausH, is involved in the next step by transforming preaustinoid A4 into isoaustinone which is in turn hydroxylated by the P450 monooxygenase ausI to form austinolide. The cytochrome P450 monooxygenase ausG then modifies austinolide to austinol. Austinol is further acetylated to austin by the O-acetyltransferase ausP, which spontaneously changes to dehydroaustin. The cytochrome P450 monooxygenase then converts dehydroaustin is into 7-dehydrodehydroaustin. The hydroxylation catalyzed by ausR permits the second O-acetyltransferase ausQ to add an additional acetyl group to the molecule, leading to the formation of acetoxydehydroaustin. Due to genetic rearrangements of the clusters and the subsequent loss of some enzymes, the end product of the Penicillium brasilianum austinoid biosynthesis clusters is acetoxydehydroaustin. In Penicillium brasilianum, this protein is Non-reducing polyketide synthase ausA.